Reading from the N-terminus, the 369-residue chain is Lipoyl synthase, mitochondrial (369 aa).

The N-terminal 32 residues, 1 to 32 (MLTKGVRALAWSPRRYITLDAEAAKPVVAKRR), are a transit peptide targeting the mitochondrion. [4Fe-4S] cluster contacts are provided by Cys-106, Cys-111, Cys-117, Cys-136, Cys-140, Cys-143, and Ser-351. One can recognise a Radical SAM core domain in the interval 121–340 (NKGSATATIM…KEKALELGFL (220 aa)).

It belongs to the radical SAM superfamily. Lipoyl synthase family. The cofactor is [4Fe-4S] cluster.

The protein localises to the mitochondrion. It catalyses the reaction [[Fe-S] cluster scaffold protein carrying a second [4Fe-4S](2+) cluster] + N(6)-octanoyl-L-lysyl-[protein] + 2 oxidized [2Fe-2S]-[ferredoxin] + 2 S-adenosyl-L-methionine + 4 H(+) = [[Fe-S] cluster scaffold protein] + N(6)-[(R)-dihydrolipoyl]-L-lysyl-[protein] + 4 Fe(3+) + 2 hydrogen sulfide + 2 5'-deoxyadenosine + 2 L-methionine + 2 reduced [2Fe-2S]-[ferredoxin]. It participates in protein modification; protein lipoylation via endogenous pathway; protein N(6)-(lipoyl)lysine from octanoyl-[acyl-carrier-protein]: step 2/2. In terms of biological role, catalyzes the radical-mediated insertion of two sulfur atoms into the C-6 and C-8 positions of the octanoyl moiety bound to the lipoyl domains of lipoate-dependent enzymes, thereby converting the octanoylated domains into lipoylated derivatives. This chain is Lipoyl synthase, mitochondrial, found in Eremothecium gossypii (strain ATCC 10895 / CBS 109.51 / FGSC 9923 / NRRL Y-1056) (Yeast).